We begin with the raw amino-acid sequence, 558 residues long: Dihydroxy-acid dehydratase (558 aa).

Mg(2+) is bound at residue D78. A [2Fe-2S] cluster-binding site is contributed by C119. Mg(2+) is bound by residues D120 and K121. At K121 the chain carries N6-carboxylysine. C192 lines the [2Fe-2S] cluster pocket. E445 is a binding site for Mg(2+). Residue S471 is the Proton acceptor of the active site.

It belongs to the IlvD/Edd family. Homodimer. [2Fe-2S] cluster is required as a cofactor. Mg(2+) serves as cofactor.

The catalysed reaction is (2R)-2,3-dihydroxy-3-methylbutanoate = 3-methyl-2-oxobutanoate + H2O. It catalyses the reaction (2R,3R)-2,3-dihydroxy-3-methylpentanoate = (S)-3-methyl-2-oxopentanoate + H2O. It functions in the pathway amino-acid biosynthesis; L-isoleucine biosynthesis; L-isoleucine from 2-oxobutanoate: step 3/4. It participates in amino-acid biosynthesis; L-valine biosynthesis; L-valine from pyruvate: step 3/4. Functionally, functions in the biosynthesis of branched-chain amino acids. Catalyzes the dehydration of (2R,3R)-2,3-dihydroxy-3-methylpentanoate (2,3-dihydroxy-3-methylvalerate) into 2-oxo-3-methylpentanoate (2-oxo-3-methylvalerate) and of (2R)-2,3-dihydroxy-3-methylbutanoate (2,3-dihydroxyisovalerate) into 2-oxo-3-methylbutanoate (2-oxoisovalerate), the penultimate precursor to L-isoleucine and L-valine, respectively. The protein is Dihydroxy-acid dehydratase of Akkermansia muciniphila (strain ATCC BAA-835 / DSM 22959 / JCM 33894 / BCRC 81048 / CCUG 64013 / CIP 107961 / Muc).